The following is a 186-amino-acid chain: uncharacterized protein (186 aa).

The protein to M.jannaschii MJ0208.

This is an uncharacterized protein from Methanocaldococcus jannaschii (strain ATCC 43067 / DSM 2661 / JAL-1 / JCM 10045 / NBRC 100440) (Methanococcus jannaschii).